A 308-amino-acid chain; its full sequence is Ribosomal RNA large subunit methyltransferase F (308 aa).

Belongs to the methyltransferase superfamily. METTL16/RlmF family.

The protein resides in the cytoplasm. It carries out the reaction adenosine(1618) in 23S rRNA + S-adenosyl-L-methionine = N(6)-methyladenosine(1618) in 23S rRNA + S-adenosyl-L-homocysteine + H(+). Its function is as follows. Specifically methylates the adenine in position 1618 of 23S rRNA. This chain is Ribosomal RNA large subunit methyltransferase F, found in Escherichia fergusonii (strain ATCC 35469 / DSM 13698 / CCUG 18766 / IAM 14443 / JCM 21226 / LMG 7866 / NBRC 102419 / NCTC 12128 / CDC 0568-73).